The sequence spans 1017 residues: Type VI secretion system spike protein VgrG3 (1017 aa).

Asp-842 is a catalytic residue.

It belongs to the VgrG protein family. Interacts with TsiV3. Interacts with TseL.

The protein localises to the secreted. Its function is as follows. Part of the type VI secretion system specialized secretion system, which delivers several virulence factors in both prokaryotic and eukaryotic cells during infection. Forms the spike at the tip of the elongating tube formed by haemolysin co-regulated protein Hcp. Allows the delivery of the TseL antibacterial toxin to target cells where it exerts its toxicity. Additionally, acts directly as an effector and targets the cell wall peptidoglycan layer of prey cells for degradation via its C-terminus. Toxicity is counteracted by a cognate immunity protein TsiV3. The sequence is that of Type VI secretion system spike protein VgrG3 from Vibrio cholerae serotype O1 (strain ATCC 39315 / El Tor Inaba N16961).